The sequence spans 181 residues: MSRIGKNPIAIPAGVTVEVNNSIVTVKGKLGQLTQNYTNNVTVKVEEGQVIVERAADSKQERAQHGLYRALINNMVAGVSTGFTKELELVGVGYRASNQGQKLDLALGFSHNIVLEIASEVTLETISEKGKNPIVKLTSFDKQLLGQVAAKIRGFRKPEPYKGKGVKFVGEVLRRKAGKSA.

The protein belongs to the universal ribosomal protein uL6 family. As to quaternary structure, part of the 50S ribosomal subunit.

In terms of biological role, this protein binds to the 23S rRNA, and is important in its secondary structure. It is located near the subunit interface in the base of the L7/L12 stalk, and near the tRNA binding site of the peptidyltransferase center. The sequence is that of Large ribosomal subunit protein uL6 from Flavobacterium psychrophilum (strain ATCC 49511 / DSM 21280 / CIP 103535 / JIP02/86).